The following is a 497-amino-acid chain: Glycerol kinase (497 aa).

Thr11 serves as a coordination point for ADP. The ATP site is built by Thr11, Ser12, and Ser13. Thr11 is a sn-glycerol 3-phosphate binding site. Arg15 contacts ADP. Sn-glycerol 3-phosphate is bound by residues Arg81, Glu82, Tyr133, and Asp242. 5 residues coordinate glycerol: Arg81, Glu82, Tyr133, Asp242, and Gln243. The ADP site is built by Thr264 and Gly307. ATP is bound by residues Thr264, Gly307, Gln311, and Gly412. ADP contacts are provided by Gly412 and Asn416.

Belongs to the FGGY kinase family.

The enzyme catalyses glycerol + ATP = sn-glycerol 3-phosphate + ADP + H(+). The protein operates within polyol metabolism; glycerol degradation via glycerol kinase pathway; sn-glycerol 3-phosphate from glycerol: step 1/1. With respect to regulation, inhibited by fructose 1,6-bisphosphate (FBP). In terms of biological role, key enzyme in the regulation of glycerol uptake and metabolism. Catalyzes the phosphorylation of glycerol to yield sn-glycerol 3-phosphate. The sequence is that of Glycerol kinase from Polaromonas naphthalenivorans (strain CJ2).